A 457-amino-acid polypeptide reads, in one-letter code: Cation efflux system protein CusC (457 aa).

A signal peptide spans methionine 1–glycine 17. Cysteine 18 carries the N-palmitoyl cysteine lipid modification. Cysteine 18 carries S-diacylglycerol cysteine lipidation.

The protein belongs to the outer membrane factor (OMF) (TC 1.B.17) family. In terms of assembly, homotrimer. Component of the cus efflux system composed of CusA, CusB, CusC and CusF.

Its subcellular location is the cell outer membrane. In terms of biological role, forms pores that allow passive diffusion of cations across the outer membrane. Part of a cation efflux system that mediates resistance to copper and silver. In pathogenic strains it allows the bacteria to invade brain microvascular endothelial cells (BMEC) thus allowing it to cross the blood-brain barrier and cause neonatal meningitis. In Escherichia coli (strain K12), this protein is Cation efflux system protein CusC (cusC).